The sequence spans 312 residues: uncharacterized protein (312 aa).

2 stretches are compositionally biased toward basic and acidic residues: residues 1–17 (MAKY…EQLE) and 28–39 (PDRDGPRHSAKL). Residues 1 to 39 (MAKYDHLELVRLPEQLERRKHGGGSPPPDRDGPRHSAKL) form a disordered region.

This is an uncharacterized protein from Sinorhizobium fredii (strain NBRC 101917 / NGR234).